A 43-amino-acid chain; its full sequence is Delta/kappa-actitoxin-Avd4a (43 aa).

Intrachain disulfides connect cysteine 4-cysteine 39, cysteine 6-cysteine 32, and cysteine 22-cysteine 40.

The protein belongs to the sea anemone type 3 (BDS) potassium channel toxin family.

It is found in the secreted. Its subcellular location is the nematocyst. Functionally, acts as a gating modifier on both Kv and Nav ion channels, and also acts on blood pressure. Voltage-dependently inhibits voltage-gated potassium channels Kv3 (Kv3.1/KCNC1, Kv3.2/KCNC2 and Kv3.4/KCNC4) and slows inactivation of the voltage-gated sodium channel Nav1.7/SCN9A. Inhibits all Kv3.1, Kv3.2 and Kv3.4 by about 50% when tested at a voltage of +40 mV (45%, 48% and 56%, respectively). May act by binding residues in voltage-sensing domains S3b and S4 of Kv3. On sodium channel, tests have been done on human Nav1.7/SCN9A (expressed in HEK293 cells) (EC(50)=3 nM) and rat SCG neurons that mostly carry Nav1.7 channels (EC(50)=300 nM). This toxin also reduces blood pressure. The polypeptide is Delta/kappa-actitoxin-Avd4a (Anemonia sulcata (Mediterranean snakelocks sea anemone)).